The following is a 295-amino-acid chain: Geranylfarnesyl diphosphate synthase (295 aa).

Isopentenyl diphosphate is bound by residues Lys51, Arg54, and His83. Positions 90 and 94 each coordinate Mg(2+). Position 99 (Arg99) interacts with an all-trans-polyprenyl diphosphate. Arg100 lines the isopentenyl diphosphate pocket. An all-trans-polyprenyl diphosphate is bound by residues Lys174, Thr175, and Gln212.

It belongs to the FPP/GGPP synthase family. Homodimer. The cofactor is Mg(2+).

The enzyme catalyses isopentenyl diphosphate + (2E,6E,10E)-geranylgeranyl diphosphate = (2E,6E,10E,14E)-geranylfarnesyl diphosphate + diphosphate. Involved in biosynthesis of the polyprenyl side-chain of methanophenazine, an electron carrier utilized for methanogenesis. Catalyzes the condensation of isopentenyl pyrophosphate with the allylic pyrophosphates to yield geranylfarnesyl diphosphate (GFPP). It prefers geranylgeranyl diphosphate (GGPP) and farnesyl diphosphate (FPP) as allylic substrate. This is Geranylfarnesyl diphosphate synthase from Methanosarcina mazei (strain ATCC BAA-159 / DSM 3647 / Goe1 / Go1 / JCM 11833 / OCM 88) (Methanosarcina frisia).